Here is a 216-residue protein sequence, read N- to C-terminus: Kynurenine formamidase (216 aa).

Position 21 (Phe21) interacts with substrate. The Zn(2+) site is built by His51, His55, and Asp57. His61 serves as the catalytic Proton donor/acceptor. Residues His167 and Glu179 each coordinate Zn(2+).

This sequence belongs to the Cyclase 1 superfamily. KynB family. Homodimer. Zn(2+) serves as cofactor.

The catalysed reaction is N-formyl-L-kynurenine + H2O = L-kynurenine + formate + H(+). Its pathway is amino-acid degradation; L-tryptophan degradation via kynurenine pathway; L-kynurenine from L-tryptophan: step 2/2. Its function is as follows. Catalyzes the hydrolysis of N-formyl-L-kynurenine to L-kynurenine, the second step in the kynurenine pathway of tryptophan degradation. The chain is Kynurenine formamidase from Paracidovorax citrulli (strain AAC00-1) (Acidovorax citrulli).